A 339-amino-acid polypeptide reads, in one-letter code: Dihydroorotate dehydrogenase (quinone) (339 aa).

FMN contacts are provided by residues 61–65 (AGLDK) and Thr-85. Lys-65 is a binding site for substrate. Substrate is bound at residue 110 to 114 (NRMGF). Positions 138 and 171 each coordinate FMN. Residue Asn-171 coordinates substrate. Ser-174 serves as the catalytic Nucleophile. Asn-176 provides a ligand contact to substrate. Residues Lys-216 and Thr-244 each coordinate FMN. 245 to 246 (NT) provides a ligand contact to substrate. Residues Gly-267, Gly-296, and 317 to 318 (YS) contribute to the FMN site.

This sequence belongs to the dihydroorotate dehydrogenase family. Type 2 subfamily. In terms of assembly, monomer. FMN is required as a cofactor.

The protein resides in the cell membrane. It catalyses the reaction (S)-dihydroorotate + a quinone = orotate + a quinol. The protein operates within pyrimidine metabolism; UMP biosynthesis via de novo pathway; orotate from (S)-dihydroorotate (quinone route): step 1/1. Functionally, catalyzes the conversion of dihydroorotate to orotate with quinone as electron acceptor. The chain is Dihydroorotate dehydrogenase (quinone) from Saccharophagus degradans (strain 2-40 / ATCC 43961 / DSM 17024).